The chain runs to 22 residues: Mu-conotoxin SxIIIC (22 aa).

3 disulfides stabilise this stretch: Cys3–Cys15, Cys4–Cys21, and Cys10–Cys22. Cys22 carries the post-translational modification Cysteine amide.

This sequence belongs to the conotoxin M superfamily. Expressed by the venom duct.

The protein localises to the secreted. Functionally, mu-conotoxins block voltage-gated sodium channels (Nav). This toxin potently inhibits hNav1.4/SCN4A (IC(50)=15.11 nM). It also displays lower activities on other human subtypes (Nav1.1/SCN1A; IC(50)=132 nM, Nav1.2/SCN2A; IC(50)=363.8, Nav1.3/SCN3A; IC(50)=89.4, Nav1.6/SCN3A; IC(50)=124.9, Nav1.7/SCN7A; IC(50)=152.2). At Nav1.7/SCN9A, it does not elicit change in channel voltage-dependence of fast inactivation or activation, suggesting it acts as a pore blocker. Interestingly, it blocks current inhibition in an irreversible manner (tested during 35 minutes). This Conus striolatus (Cone snail) protein is Mu-conotoxin SxIIIC.